A 150-amino-acid polypeptide reads, in one-letter code: Large ribosomal subunit protein bL9 (150 aa).

It belongs to the bacterial ribosomal protein bL9 family.

In terms of biological role, binds to the 23S rRNA. The chain is Large ribosomal subunit protein bL9 from Pectobacterium carotovorum subsp. carotovorum (strain PC1).